We begin with the raw amino-acid sequence, 425 residues long: Glutamate-1-semialdehyde 2,1-aminomutase (425 aa).

Residue K265 is modified to N6-(pyridoxal phosphate)lysine.

This sequence belongs to the class-III pyridoxal-phosphate-dependent aminotransferase family. HemL subfamily. Homodimer. Requires pyridoxal 5'-phosphate as cofactor.

The protein localises to the cytoplasm. It catalyses the reaction (S)-4-amino-5-oxopentanoate = 5-aminolevulinate. The protein operates within porphyrin-containing compound metabolism; protoporphyrin-IX biosynthesis; 5-aminolevulinate from L-glutamyl-tRNA(Glu): step 2/2. This chain is Glutamate-1-semialdehyde 2,1-aminomutase, found in Psychromonas ingrahamii (strain DSM 17664 / CCUG 51855 / 37).